The chain runs to 386 residues: 1-deoxy-D-xylulose 5-phosphate reductoisomerase (386 aa).

The NADPH site is built by Thr-7, Gly-8, Ser-9, Ile-10, Ala-33, and Asn-124. Residue Lys-125 coordinates 1-deoxy-D-xylulose 5-phosphate. Glu-126 contacts NADPH. Residue Asp-148 participates in Mn(2+) binding. 4 residues coordinate 1-deoxy-D-xylulose 5-phosphate: Ser-149, Glu-150, Ser-174, and His-197. Glu-150 contacts Mn(2+). Gly-203 is an NADPH binding site. 1-deoxy-D-xylulose 5-phosphate is bound by residues Ser-210, Asn-215, Lys-216, and Glu-219. Position 219 (Glu-219) interacts with Mn(2+).

Belongs to the DXR family. Requires Mg(2+) as cofactor. The cofactor is Mn(2+).

The catalysed reaction is 2-C-methyl-D-erythritol 4-phosphate + NADP(+) = 1-deoxy-D-xylulose 5-phosphate + NADPH + H(+). It functions in the pathway isoprenoid biosynthesis; isopentenyl diphosphate biosynthesis via DXP pathway; isopentenyl diphosphate from 1-deoxy-D-xylulose 5-phosphate: step 1/6. In terms of biological role, catalyzes the NADPH-dependent rearrangement and reduction of 1-deoxy-D-xylulose-5-phosphate (DXP) to 2-C-methyl-D-erythritol 4-phosphate (MEP). In Kitasatospora griseola (Streptomyces griseolosporeus), this protein is 1-deoxy-D-xylulose 5-phosphate reductoisomerase.